The chain runs to 356 residues: Histidinol-phosphate aminotransferase (356 aa).

N6-(pyridoxal phosphate)lysine is present on K214.

The protein belongs to the class-II pyridoxal-phosphate-dependent aminotransferase family. Histidinol-phosphate aminotransferase subfamily. As to quaternary structure, homodimer. Requires pyridoxal 5'-phosphate as cofactor.

It carries out the reaction L-histidinol phosphate + 2-oxoglutarate = 3-(imidazol-4-yl)-2-oxopropyl phosphate + L-glutamate. The protein operates within amino-acid biosynthesis; L-histidine biosynthesis; L-histidine from 5-phospho-alpha-D-ribose 1-diphosphate: step 7/9. The polypeptide is Histidinol-phosphate aminotransferase (Escherichia coli O7:K1 (strain IAI39 / ExPEC)).